The primary structure comprises 231 residues: Uracil-DNA glycosylase (231 aa).

D74 functions as the Proton acceptor in the catalytic mechanism.

Belongs to the uracil-DNA glycosylase (UDG) superfamily. UNG family.

Its subcellular location is the cytoplasm. It catalyses the reaction Hydrolyzes single-stranded DNA or mismatched double-stranded DNA and polynucleotides, releasing free uracil.. Functionally, excises uracil residues from the DNA which can arise as a result of misincorporation of dUMP residues by DNA polymerase or due to deamination of cytosine. This is Uracil-DNA glycosylase from Campylobacter jejuni subsp. jejuni serotype O:2 (strain ATCC 700819 / NCTC 11168).